The following is a 280-amino-acid chain: Succinate dehydrogenase [ubiquinone] iron-sulfur subunit, mitochondrial (280 aa).

Residues 1-25 (MAAVCFSLSRCCSAVHRPAVTAVRF) constitute a mitochondrion transit peptide. The region spanning 39–129 (KKFQIYRWDP…TSKVTKIYPL (91 aa)) is the 2Fe-2S ferredoxin-type domain. Positions 92, 97, 100, and 112 each coordinate [2Fe-2S] cluster. Positions 175-205 (DRQKLDGLYECILCACCSTSCPSYWWNADKY) constitute a 4Fe-4S ferredoxin-type domain. Positions 185, 188, and 191 each coordinate [4Fe-4S] cluster. Cys-195 contributes to the [3Fe-4S] cluster binding site. Trp-200 serves as a coordination point for a ubiquinone. [3Fe-4S] cluster-binding residues include Cys-242 and Cys-248. Cys-252 provides a ligand contact to [4Fe-4S] cluster.

It belongs to the succinate dehydrogenase/fumarate reductase iron-sulfur protein family. In terms of assembly, component of complex II composed of four subunits: the flavoprotein (FP) sdha, iron-sulfur protein (IP) sdhb, and a cytochrome b composed of sdhc and sdhd. [2Fe-2S] cluster is required as a cofactor. Requires [3Fe-4S] cluster as cofactor. It depends on [4Fe-4S] cluster as a cofactor.

The protein resides in the mitochondrion inner membrane. It carries out the reaction a quinone + succinate = fumarate + a quinol. The catalysed reaction is (R)-malate + a quinone = enol-oxaloacetate + a quinol. The enzyme catalyses (S)-malate + a quinone = enol-oxaloacetate + a quinol. It participates in carbohydrate metabolism; tricarboxylic acid cycle; fumarate from succinate (eukaryal route): step 1/1. Its activity is regulated as follows. Enol-oxaloacetate inhibits the succinate dehydrogenase activity. Its function is as follows. Iron-sulfur protein (IP) subunit of the succinate dehydrogenase complex (mitochondrial respiratory chain complex II), responsible for transferring electrons from succinate to ubiquinone (coenzyme Q). SDH also oxidizes malate to the non-canonical enol form of oxaloacetate, enol-oxaloacetate. Enol-oxaloacetate, which is a potent inhibitor of the succinate dehydrogenase activity, is further isomerized into keto-oxaloacetate. The protein is Succinate dehydrogenase [ubiquinone] iron-sulfur subunit, mitochondrial (sdhb) of Danio rerio (Zebrafish).